The sequence spans 352 residues: Histidinol-phosphate aminotransferase 1 (352 aa).

K211 carries the N6-(pyridoxal phosphate)lysine modification.

It belongs to the class-II pyridoxal-phosphate-dependent aminotransferase family. Histidinol-phosphate aminotransferase subfamily. Homodimer. The cofactor is pyridoxal 5'-phosphate.

The enzyme catalyses L-histidinol phosphate + 2-oxoglutarate = 3-(imidazol-4-yl)-2-oxopropyl phosphate + L-glutamate. It participates in amino-acid biosynthesis; L-histidine biosynthesis; L-histidine from 5-phospho-alpha-D-ribose 1-diphosphate: step 7/9. This is Histidinol-phosphate aminotransferase 1 from Haemophilus influenzae (strain 86-028NP).